The chain runs to 185 residues: Ribosome-recycling factor (185 aa).

Belongs to the RRF family.

The protein localises to the cytoplasm. Functionally, responsible for the release of ribosomes from messenger RNA at the termination of protein biosynthesis. May increase the efficiency of translation by recycling ribosomes from one round of translation to another. The chain is Ribosome-recycling factor from Nocardioides sp. (strain ATCC BAA-499 / JS614).